A 250-amino-acid polypeptide reads, in one-letter code: 3-deoxy-manno-octulosonate cytidylyltransferase (250 aa).

The protein belongs to the KdsB family.

Its subcellular location is the cytoplasm. The enzyme catalyses 3-deoxy-alpha-D-manno-oct-2-ulosonate + CTP = CMP-3-deoxy-beta-D-manno-octulosonate + diphosphate. It participates in nucleotide-sugar biosynthesis; CMP-3-deoxy-D-manno-octulosonate biosynthesis; CMP-3-deoxy-D-manno-octulosonate from 3-deoxy-D-manno-octulosonate and CTP: step 1/1. It functions in the pathway bacterial outer membrane biogenesis; lipopolysaccharide biosynthesis. Activates KDO (a required 8-carbon sugar) for incorporation into bacterial lipopolysaccharide in Gram-negative bacteria. This chain is 3-deoxy-manno-octulosonate cytidylyltransferase, found in Pectobacterium carotovorum subsp. carotovorum (strain PC1).